Reading from the N-terminus, the 556-residue chain is Glutamine--tRNA ligase (556 aa).

Residues 33–43 (PEPNGYLHIGH) carry the 'HIGH' region motif. Residues 34-36 (EPN) and 40-46 (HIGHAKS) contribute to the ATP site. Aspartate 66 and tyrosine 210 together coordinate L-glutamine. ATP is bound by residues threonine 229, 259 to 260 (RL), and 267 to 269 (MSK). Positions 266-270 (VMSKR) match the 'KMSKS' region motif.

The protein belongs to the class-I aminoacyl-tRNA synthetase family. Monomer.

It is found in the cytoplasm. It carries out the reaction tRNA(Gln) + L-glutamine + ATP = L-glutaminyl-tRNA(Gln) + AMP + diphosphate. The sequence is that of Glutamine--tRNA ligase from Clostridium kluyveri (strain ATCC 8527 / DSM 555 / NBRC 12016 / NCIMB 10680 / K1).